The sequence spans 182 residues: Transcription termination/antitermination protein NusG (182 aa).

The KOW domain maps to 131 to 163 (VGEQVRIKSGPFANQVGEVQEIETDKFKLTVLV).

It belongs to the NusG family.

Participates in transcription elongation, termination and antitermination. This is Transcription termination/antitermination protein NusG from Staphylococcus aureus (strain NCTC 8325 / PS 47).